Reading from the N-terminus, the 447-residue chain is Tol-Pal system protein TolB (447 aa).

Positions 1–29 (MITMSRIRSLAAFAVFVILGVAAVLPAQA) are cleaved as a signal peptide.

This sequence belongs to the TolB family. As to quaternary structure, the Tol-Pal system is composed of five core proteins: the inner membrane proteins TolA, TolQ and TolR, the periplasmic protein TolB and the outer membrane protein Pal. They form a network linking the inner and outer membranes and the peptidoglycan layer.

It localises to the periplasm. Its function is as follows. Part of the Tol-Pal system, which plays a role in outer membrane invagination during cell division and is important for maintaining outer membrane integrity. The polypeptide is Tol-Pal system protein TolB (Paramagnetospirillum magneticum (strain ATCC 700264 / AMB-1) (Magnetospirillum magneticum)).